A 420-amino-acid polypeptide reads, in one-letter code: D-tagatose-1,6-bisphosphate aldolase subunit GatZ (420 aa).

Belongs to the GatZ/KbaZ family. GatZ subfamily. Forms a complex with GatY.

It functions in the pathway carbohydrate metabolism; D-tagatose 6-phosphate degradation; D-glyceraldehyde 3-phosphate and glycerone phosphate from D-tagatose 6-phosphate: step 2/2. In terms of biological role, component of the tagatose-1,6-bisphosphate aldolase GatYZ that is required for full activity and stability of the Y subunit. Could have a chaperone-like function for the proper and stable folding of GatY. When expressed alone, GatZ does not show any aldolase activity. Is involved in the catabolism of galactitol. This is D-tagatose-1,6-bisphosphate aldolase subunit GatZ from Escherichia coli O7:K1 (strain IAI39 / ExPEC).